A 465-amino-acid chain; its full sequence is Mitochondrial F-box protein MFB1 (465 aa).

An F-box domain is found at 14–60 (ERSLTNLPLNLLFRILSHLDMNDLQNIGKTCTLLRMLANENIVYRNA). The disordered stretch occupies residues 253–279 (FTKSRDPDYKEMTPTSTESSDSITRLR). Positions 254 to 263 (TKSRDPDYKE) are enriched in basic and acidic residues. Over residues 265-275 (TPTSTESSDSI) the composition is skewed to polar residues.

It is found in the mitochondrion. This chain is Mitochondrial F-box protein MFB1 (MFB1), found in Saccharomyces cerevisiae (strain ATCC 204508 / S288c) (Baker's yeast).